Reading from the N-terminus, the 258-residue chain is Trans-aconitate 2-methyltransferase (258 aa).

Belongs to the methyltransferase superfamily. Tam family.

It localises to the cytoplasm. It catalyses the reaction trans-aconitate + S-adenosyl-L-methionine = (E)-3-(methoxycarbonyl)pent-2-enedioate + S-adenosyl-L-homocysteine. Functionally, catalyzes the S-adenosylmethionine monomethyl esterification of trans-aconitate. This is Trans-aconitate 2-methyltransferase from Acidovorax sp. (strain JS42).